A 316-amino-acid chain; its full sequence is Transaldolase (316 aa).

The Schiff-base intermediate with substrate role is filled by Lys132.

The protein belongs to the transaldolase family. Type 1 subfamily. In terms of assembly, homodimer.

The protein localises to the cytoplasm. It catalyses the reaction D-sedoheptulose 7-phosphate + D-glyceraldehyde 3-phosphate = D-erythrose 4-phosphate + beta-D-fructose 6-phosphate. The protein operates within carbohydrate degradation; pentose phosphate pathway; D-glyceraldehyde 3-phosphate and beta-D-fructose 6-phosphate from D-ribose 5-phosphate and D-xylulose 5-phosphate (non-oxidative stage): step 2/3. In terms of biological role, transaldolase is important for the balance of metabolites in the pentose-phosphate pathway. This Aeromonas salmonicida (strain A449) protein is Transaldolase.